The following is a 622-amino-acid chain: MKENVASATVFTLLLFLNTCLLNGQLPPGKPEIFKCRSPNKETFTCWWRPGTDGGLPTNYSLTYHREGETLMHECPDYITGGPNSCHFGKQYTSMWRTYIMMVNATNQMGSSFSDELYVDVTYIVQPDPPLELAVEVKQPEDRKPYLWIKWSPPTLIDLKTGWFTLLYEIRLKPEKAAEWEIHFAGQQTEFKILSLHPGQKYLVQVRCKPDHGYWSAWSPATFIQIPSDFTMNDTTVWISVAVLSAVICLIIVWAVALKGYSMVTCIFPPVPGPKIKGFDAHLLEKGKSEELLSALGCQDFPPTSDYEDLLVEYLEVDDSEDQHLMSVHSKEHPSQGMKPTYLDPDTDSGRGSCDSPSLLSEKCEEPQANPSTFYDPEVIEKPENPETTHTWDPQCISMEGKIPYFHAGGSKCSTWPLPQPSQHNPRSSYHNITDVCELAVGPAGAPATLLNEAGKDALKSSQTIKSREEGKATQQREVESFHSETDQDTPWLLPQEKTPFGSAKPLDYVEIHKVNKDGALSLLPKQRENSGKPKKPGTPENNKEYAKVSGVMDNNILVLVPDPHAKNVACFEESAKEAPPSLEQNQAEKALANFTATSSKCRLQLGGLDYLDPACFTHSFH.

The signal sequence occupies residues 1 to 24; the sequence is MKENVASATVFTLLLFLNTCLLNG. The Extracellular portion of the chain corresponds to 25 to 234; it reads QLPPGKPEIF…QIPSDFTMND (210 aa). 2 consecutive Fibronectin type-III domains span residues 27–128 and 129–229; these read PPGK…VQPD and PPLE…IPSD. C36 and C46 form a disulfide bridge. A glycan (N-linked (GlcNAc...) asparagine) is linked at N59. The cysteines at positions 75 and 86 are disulfide-linked. Residue N104 is glycosylated (N-linked (GlcNAc...) asparagine). Positions 211 and 212 each coordinate Zn(2+). The WSXWS motif motif lies at 215 to 219; that stretch reads WSAWS. Residue N233 is glycosylated (N-linked (GlcNAc...) asparagine). Residues 235 to 258 form a helical membrane-spanning segment; it reads TTVWISVAVLSAVICLIIVWAVAL. Residues 259 to 622 lie on the Cytoplasmic side of the membrane; it reads KGYSMVTCIF…DPACFTHSFH (364 aa). The Box 1 motif signature appears at 267 to 275; that stretch reads IFPPVPGPK. 3 disordered regions span residues 326–378, 461–505, and 520–545; these read MSVH…YDPE, SSQT…GSAK, and ALSLLPKQRENSGKPKKPGTPENNKE. Over residues 466–486 the composition is skewed to basic and acidic residues; that stretch reads KSREEGKATQQREVESFHSET.

Belongs to the type I cytokine receptor family. Type 1 subfamily. In terms of assembly, homodimer upon hormone binding. Interacts with SMARCA1. Interacts with GH1. Interacts with CSH. Interacts with NEK3 and VAV2 and this interaction is prolactin-dependent. Expressed in breast, placenta, kidney, liver and pancreas.

Its subcellular location is the membrane. It localises to the secreted. Functionally, this is a receptor for the anterior pituitary hormone prolactin (PRL). Acts as a prosurvival factor for spermatozoa by inhibiting sperm capacitation through suppression of SRC kinase activation and stimulation of AKT. Isoform 4 is unable to transduce prolactin signaling. Isoform 6 is unable to transduce prolactin signaling. This Homo sapiens (Human) protein is Prolactin receptor (PRLR).